Here is a 492-residue protein sequence, read N- to C-terminus: Aspartyl/glutamyl-tRNA(Asn/Gln) amidotransferase subunit B (492 aa).

It belongs to the GatB/GatE family. GatB subfamily. Heterotrimer of A, B and C subunits.

It carries out the reaction L-glutamyl-tRNA(Gln) + L-glutamine + ATP + H2O = L-glutaminyl-tRNA(Gln) + L-glutamate + ADP + phosphate + H(+). The catalysed reaction is L-aspartyl-tRNA(Asn) + L-glutamine + ATP + H2O = L-asparaginyl-tRNA(Asn) + L-glutamate + ADP + phosphate + 2 H(+). Allows the formation of correctly charged Asn-tRNA(Asn) or Gln-tRNA(Gln) through the transamidation of misacylated Asp-tRNA(Asn) or Glu-tRNA(Gln) in organisms which lack either or both of asparaginyl-tRNA or glutaminyl-tRNA synthetases. The reaction takes place in the presence of glutamine and ATP through an activated phospho-Asp-tRNA(Asn) or phospho-Glu-tRNA(Gln). This chain is Aspartyl/glutamyl-tRNA(Asn/Gln) amidotransferase subunit B, found in Prochlorococcus marinus (strain SARG / CCMP1375 / SS120).